Here is a 707-residue protein sequence, read N- to C-terminus: Trans-feruloyl-CoA synthase FCS1 (707 aa).

Residues H267 and 524 to 535 (ARAIGYPVVMKA) contribute to the ATP site. The region spanning 498–549 (KELLRPLGIAFPPSQFAANAEAAAAAARAIGYPVVMKAQAAALGHKSDAGGV) is the ATP-grasp domain.

It in the N-terminal section; belongs to the acetate CoA ligase alpha subunit family. This sequence in the C-terminal section; belongs to the acetate CoA ligase beta subunit family. As to quaternary structure, homodimer.

It catalyses the reaction (E)-ferulate + ATP + CoA = (E)-feruloyl-CoA + ADP + phosphate. Catalyzes the formation of feruloyl-CoA, ADP and phosphate from ferulate, CoA and ATP. The polypeptide is Trans-feruloyl-CoA synthase FCS1 (Unknown prokaryotic organism).